The primary structure comprises 77 residues: U14-theraphotoxin-Cg1a 3 (77 aa).

The N-terminal stretch at 1 to 21 (MKTSVLLVILGIAAITVQCTA) is a signal peptide. Positions 22 to 49 (SESVEQDSLRTFVDTVLGWNAEMASEAR) are excised as a propeptide. Disulfide bonds link Cys50-Cys64, Cys57-Cys69, and Cys63-Cys75. Lysine amide is present on Lys77.

This sequence belongs to the neurotoxin 10 (Hwtx-1) family. 65 (Jztx-21) subfamily. Expressed by the venom gland.

It is found in the secreted. Probable ion channel inhibitor. The sequence is that of U14-theraphotoxin-Cg1a 3 from Chilobrachys guangxiensis (Chinese earth tiger tarantula).